Reading from the N-terminus, the 331-residue chain is Nucleoporin Nup35 (331 aa).

Disordered regions lie at residues 1 to 63 (MEPM…HELN) and 79 to 110 (AHTAVGANSSTTAHGQTHSHHQTGPPTQGLFD). Polar residues-rich tracts occupy residues 8–20 (SPVNSPGSNQTQY), 35–56 (HKNTLSPKTGRSNISFATSPGG), and 84–104 (GANSSTTAHGQTHSHHQTGPP). Residues 187–268 (RLSDFWVTIF…SRCTDRSVID (82 aa)) enclose the RRM Nup35-type domain.

Belongs to the Nup35 family. As to quaternary structure, interacts with Nup154.

It localises to the nucleus. It is found in the nuclear pore complex. Functions as a component of the nuclear pore complex (NPC). May have a role in the organization of the inner nuclear membrane proteins at the nuclear envelope together with Nup154. The polypeptide is Nucleoporin Nup35 (Drosophila melanogaster (Fruit fly)).